A 253-amino-acid chain; its full sequence is MNAIDLNSDVGESYGAYTIGNDEKIMPYISSANIACGFHAGDAHVMRETVARALEHSVAIGAHPGLPDIGGFGRRNIDISPQEGYELVVYQIGALWAIAKAQGGKLHHVKPHGALYNMAAADQALAEAIANAVYDVDPNLVFYGLAGSALIAAGKKAGLKTASEVFADRTYQADGSLTSRRAPNALITDAKEASAQVLRMIQEGKVRTQQGTDVKIDAQTVCIHGDGAQAVAFAEQLKGELERHGITVKAGNC.

Belongs to the LamB/PxpA family. In terms of assembly, forms a complex composed of PxpA, PxpB and PxpC.

The catalysed reaction is 5-oxo-L-proline + ATP + 2 H2O = L-glutamate + ADP + phosphate + H(+). Catalyzes the cleavage of 5-oxoproline to form L-glutamate coupled to the hydrolysis of ATP to ADP and inorganic phosphate. The sequence is that of 5-oxoprolinase subunit A from Shouchella clausii (strain KSM-K16) (Alkalihalobacillus clausii).